The sequence spans 755 residues: Xaa-Pro dipeptidyl-peptidase (755 aa).

Residues S348, D468, and H498 each act as charge relay system in the active site.

This sequence belongs to the peptidase S15 family. Homodimer.

Its subcellular location is the cytoplasm. It carries out the reaction Hydrolyzes Xaa-Pro-|- bonds to release unblocked, N-terminal dipeptides from substrates including Ala-Pro-|-p-nitroanilide and (sequentially) Tyr-Pro-|-Phe-Pro-|-Gly-Pro-|-Ile.. In terms of biological role, removes N-terminal dipeptides sequentially from polypeptides having unsubstituted N-termini provided that the penultimate residue is proline. This is Xaa-Pro dipeptidyl-peptidase from Streptococcus thermophilus (strain ATCC BAA-491 / LMD-9).